We begin with the raw amino-acid sequence, 157 residues long: Arginine repressor (157 aa).

Belongs to the ArgR family.

The protein resides in the cytoplasm. It functions in the pathway amino-acid biosynthesis; L-arginine biosynthesis [regulation]. In terms of biological role, regulates arginine biosynthesis genes. The chain is Arginine repressor from Deinococcus deserti (strain DSM 17065 / CIP 109153 / LMG 22923 / VCD115).